A 1028-amino-acid chain; its full sequence is Isoleucine--tRNA ligase (1028 aa).

Positions 51–61 match the 'HIGH' region motif; that stretch reads PTANGRPHIGH. The 'KMSKS' region signature appears at 591 to 595; that stretch reads KMSKS. Lysine 594 provides a ligand contact to ATP.

Belongs to the class-I aminoacyl-tRNA synthetase family. IleS type 2 subfamily. Monomer. It depends on Zn(2+) as a cofactor.

The protein localises to the cytoplasm. It catalyses the reaction tRNA(Ile) + L-isoleucine + ATP = L-isoleucyl-tRNA(Ile) + AMP + diphosphate. In terms of biological role, catalyzes the attachment of isoleucine to tRNA(Ile). As IleRS can inadvertently accommodate and process structurally similar amino acids such as valine, to avoid such errors it has two additional distinct tRNA(Ile)-dependent editing activities. One activity is designated as 'pretransfer' editing and involves the hydrolysis of activated Val-AMP. The other activity is designated 'posttransfer' editing and involves deacylation of mischarged Val-tRNA(Ile). In Thermoplasma volcanium (strain ATCC 51530 / DSM 4299 / JCM 9571 / NBRC 15438 / GSS1), this protein is Isoleucine--tRNA ligase.